The primary structure comprises 361 residues: WAT1-related protein At4g01450 (361 aa).

The next 10 membrane-spanning stretches (helical) occupy residues W8–V28, V40–W60, L76–S96, G103–F123, I132–M152, W177–I197, Y209–I229, L243–M263, V273–I293, and I298–W318. EamA domains lie at A21–I142 and W194–L317.

The protein belongs to the drug/metabolite transporter (DMT) superfamily. Plant drug/metabolite exporter (P-DME) (TC 2.A.7.4) family.

It localises to the membrane. The chain is WAT1-related protein At4g01450 from Arabidopsis thaliana (Mouse-ear cress).